Consider the following 542-residue polypeptide: CTP synthase (542 aa).

Residues 1-265 (MARYVFITGG…DDEVLAAFGI (265 aa)) form an amidoligase domain region. Ser13 lines the CTP pocket. UTP is bound at residue Ser13. ATP is bound by residues 14–19 (SLGKGI) and Asp71. Positions 71 and 139 each coordinate Mg(2+). CTP contacts are provided by residues 146–148 (DIE), 186–191 (KTKPTQ), and Lys222. UTP contacts are provided by residues 186-191 (KTKPTQ) and Lys222. The Glutamine amidotransferase type-1 domain occupies 291-541 (TIAIVGKYTG…IEAATEQSRL (251 aa)). Gly353 is an L-glutamine binding site. Catalysis depends on Cys380, which acts as the Nucleophile; for glutamine hydrolysis. Residues 381–384 (FGMQ), Glu404, and Arg469 contribute to the L-glutamine site. Active-site residues include His514 and Glu516.

It belongs to the CTP synthase family. As to quaternary structure, homotetramer.

The catalysed reaction is UTP + L-glutamine + ATP + H2O = CTP + L-glutamate + ADP + phosphate + 2 H(+). It carries out the reaction L-glutamine + H2O = L-glutamate + NH4(+). The enzyme catalyses UTP + NH4(+) + ATP = CTP + ADP + phosphate + 2 H(+). It participates in pyrimidine metabolism; CTP biosynthesis via de novo pathway; CTP from UDP: step 2/2. Its activity is regulated as follows. Allosterically activated by GTP, when glutamine is the substrate; GTP has no effect on the reaction when ammonia is the substrate. The allosteric effector GTP functions by stabilizing the protein conformation that binds the tetrahedral intermediate(s) formed during glutamine hydrolysis. Inhibited by the product CTP, via allosteric rather than competitive inhibition. Functionally, catalyzes the ATP-dependent amination of UTP to CTP with either L-glutamine or ammonia as the source of nitrogen. Regulates intracellular CTP levels through interactions with the four ribonucleotide triphosphates. This is CTP synthase from Rhizobium johnstonii (strain DSM 114642 / LMG 32736 / 3841) (Rhizobium leguminosarum bv. viciae).